The primary structure comprises 260 residues: Snake venom serine protease homolog 1 (260 aa).

Positions 1–18 (MVLIRVLANLLILQLSYA) are cleaved as a signal peptide. Positions 19-24 (QKSSEL) are excised as a propeptide. A Peptidase S1 domain is found at 25–251 (IIGGDECNIN…HLDWIKSIIA (227 aa)). 6 disulfides stabilise this stretch: cysteine 31-cysteine 165, cysteine 52-cysteine 68, cysteine 100-cysteine 258, cysteine 144-cysteine 212, cysteine 176-cysteine 191, and cysteine 202-cysteine 227. N-linked (GlcNAc...) asparagine glycosylation is found at asparagine 83, asparagine 123, and asparagine 124.

Belongs to the peptidase S1 family. Snake venom subfamily. Expressed by the venom gland.

The protein localises to the secreted. In terms of biological role, snake venom serine protease homolog that may act in the hemostasis system of the prey. The chain is Snake venom serine protease homolog 1 from Trimeresurus stejnegeri (Chinese green tree viper).